The sequence spans 180 residues: Probable chorismate pyruvate-lyase (180 aa).

Substrate-binding residues include Arg82, Leu120, and Glu165.

It belongs to the UbiC family.

The protein localises to the cytoplasm. The catalysed reaction is chorismate = 4-hydroxybenzoate + pyruvate. It participates in cofactor biosynthesis; ubiquinone biosynthesis. In terms of biological role, removes the pyruvyl group from chorismate, with concomitant aromatization of the ring, to provide 4-hydroxybenzoate (4HB) for the ubiquinone pathway. The protein is Probable chorismate pyruvate-lyase of Aliivibrio fischeri (strain ATCC 700601 / ES114) (Vibrio fischeri).